A 277-amino-acid polypeptide reads, in one-letter code: uncharacterized protein (277 aa).

32 to 39 (GPQGSGKS) is an ATP binding site.

The protein belongs to the GLYK kinase family.

The protein localises to the cytoplasm. The protein resides in the nucleus. Its function is as follows. Has a role in meiosis. This is an uncharacterized protein from Schizosaccharomyces pombe (strain 972 / ATCC 24843) (Fission yeast).